Here is a 197-residue protein sequence, read N- to C-terminus: Imidazoleglycerol-phosphate dehydratase (197 aa).

The protein belongs to the imidazoleglycerol-phosphate dehydratase family.

Its subcellular location is the cytoplasm. The catalysed reaction is D-erythro-1-(imidazol-4-yl)glycerol 3-phosphate = 3-(imidazol-4-yl)-2-oxopropyl phosphate + H2O. It functions in the pathway amino-acid biosynthesis; L-histidine biosynthesis; L-histidine from 5-phospho-alpha-D-ribose 1-diphosphate: step 6/9. In Marinobacter nauticus (strain ATCC 700491 / DSM 11845 / VT8) (Marinobacter aquaeolei), this protein is Imidazoleglycerol-phosphate dehydratase.